Reading from the N-terminus, the 303-residue chain is Pseudouridine-5'-phosphate glycosidase (303 aa).

Glu24 serves as the catalytic Proton donor. Substrate-binding residues include Lys85 and Val105. Asp137 provides a ligand contact to Mn(2+). 139-141 is a binding site for substrate; that stretch reads SAD. The active-site Nucleophile is Lys158.

This sequence belongs to the pseudouridine-5'-phosphate glycosidase family. Homotrimer. Requires Mn(2+) as cofactor.

It catalyses the reaction D-ribose 5-phosphate + uracil = psi-UMP + H2O. Catalyzes the reversible cleavage of pseudouridine 5'-phosphate (PsiMP) to ribose 5-phosphate and uracil. Functions biologically in the cleavage direction, as part of a pseudouridine degradation pathway. The sequence is that of Pseudouridine-5'-phosphate glycosidase from Herpetosiphon aurantiacus (strain ATCC 23779 / DSM 785 / 114-95).